The primary structure comprises 200 residues: UPF0316 protein SACOL1973 (200 aa).

Helical transmembrane passes span 8 to 28 (PWLM…FLTM), 40 to 60 (IAAS…GLVM), and 66 to 86 (IQNI…GMKI).

Belongs to the UPF0316 family.

The protein localises to the cell membrane. The chain is UPF0316 protein SACOL1973 from Staphylococcus aureus (strain COL).